We begin with the raw amino-acid sequence, 215 residues long: Probable nicotinate-nucleotide adenylyltransferase (215 aa).

This sequence belongs to the NadD family.

It catalyses the reaction nicotinate beta-D-ribonucleotide + ATP + H(+) = deamido-NAD(+) + diphosphate. Its pathway is cofactor biosynthesis; NAD(+) biosynthesis; deamido-NAD(+) from nicotinate D-ribonucleotide: step 1/1. Catalyzes the reversible adenylation of nicotinate mononucleotide (NaMN) to nicotinic acid adenine dinucleotide (NaAD). The polypeptide is Probable nicotinate-nucleotide adenylyltransferase (Shewanella sp. (strain W3-18-1)).